The sequence spans 289 residues: Probable endonuclease 4 (289 aa).

Residues His75, His115, Glu153, Asp187, His190, His224, Asp237, His239, and Glu269 each coordinate Zn(2+).

Belongs to the AP endonuclease 2 family. The cofactor is Zn(2+).

The enzyme catalyses Endonucleolytic cleavage to 5'-phosphooligonucleotide end-products.. Its function is as follows. Endonuclease IV plays a role in DNA repair. It cleaves phosphodiester bonds at apurinic or apyrimidinic (AP) sites, generating a 3'-hydroxyl group and a 5'-terminal sugar phosphate. The polypeptide is Probable endonuclease 4 (Chlamydia caviae (strain ATCC VR-813 / DSM 19441 / 03DC25 / GPIC) (Chlamydophila caviae)).